The following is a 117-amino-acid chain: Regulator of ribonuclease activity B (117 aa).

Belongs to the RraB family. Interacts with the C-terminal region of Rne.

Its subcellular location is the cytoplasm. Globally modulates RNA abundance by binding to RNase E (Rne) and regulating its endonucleolytic activity. Can modulate Rne action in a substrate-dependent manner by altering the composition of the degradosome. The sequence is that of Regulator of ribonuclease activity B from Pseudoalteromonas atlantica (strain T6c / ATCC BAA-1087).